We begin with the raw amino-acid sequence, 277 residues long: Large ribosomal subunit protein uL2 (277 aa).

The disordered stretch occupies residues 225–277; the sequence is MNPVDHPHGGGEGKTSGGRNSVTPWGVPTKGKKTRKRGKHSDKYIKVSSVRKR. The span at 254–264 shows a compositional bias: basic residues; that stretch reads KGKKTRKRGKH.

This sequence belongs to the universal ribosomal protein uL2 family. In terms of assembly, part of the 50S ribosomal subunit. Forms a bridge to the 30S subunit in the 70S ribosome.

Functionally, one of the primary rRNA binding proteins. Required for association of the 30S and 50S subunits to form the 70S ribosome, for tRNA binding and peptide bond formation. It has been suggested to have peptidyltransferase activity; this is somewhat controversial. Makes several contacts with the 16S rRNA in the 70S ribosome. The chain is Large ribosomal subunit protein uL2 from Anaplasma marginale (strain Florida).